Here is a 511-residue protein sequence, read N- to C-terminus: Intermediate cleaving peptidase 55 (511 aa).

Residues D327, D338, H417, E444, and E467 each coordinate Mn(2+).

Belongs to the peptidase M24B family. It depends on Mn(2+) as a cofactor.

It localises to the nucleus. Its subcellular location is the mitochondrion inner membrane. It catalyses the reaction The enzyme cleaves the 36-Pro-Pro-37 bond of cysteine desulfurase (EC 2.8.1.7) removing three amino acid residues (Tyr-Ser-Pro) from the N-terminus after cleavage by mitochondrial processing peptidase.. Functionally, aminopeptidase which cleaves preprotein intermediates that carry destabilizing N-ter amino acid residues after the mitochondrial processing peptidase (MPP) cleavage site and is thus critical for stabilization of the mitochondrial proteome. The polypeptide is Intermediate cleaving peptidase 55 (ICP55) (Saccharomyces cerevisiae (strain ATCC 204508 / S288c) (Baker's yeast)).